A 150-amino-acid polypeptide reads, in one-letter code: Transthyretin (150 aa).

The first 20 residues, 1–20 (MGSSSLLLVCLAGMVYLTEA), serve as a signal peptide directing secretion. Cysteine 33 carries the post-translational modification Sulfocysteine. L-thyroxine-binding residues include lysine 38, glutamate 77, and serine 140.

Belongs to the transthyretin family. In terms of assembly, homotetramer. Dimer of dimers. In the homotetramer, subunits assemble around a central channel that can accommodate two ligand molecules. Interacts with RBP4. In terms of processing, sulfonation of the reactive cysteine Cys-33 enhances the stability of the native conformation of TTR, avoiding misassembly of the protein leading to amyloid formation. Detected in choroid plexus (at protein level). Detected in choroid plexus.

The protein resides in the secreted. Functionally, thyroid hormone-binding protein. Probably transports thyroxine from the bloodstream to the brain. This is Transthyretin (TTR) from Tiliqua rugosa (Shingleback lizard).